Reading from the N-terminus, the 1338-residue chain is Aldehyde oxidase 1 (1338 aa).

The 2Fe-2S ferredoxin-type domain maps to 5 to 92 (SELLFYVNGR…GTAVTTVEGI (88 aa)). Mo-molybdopterin is bound by residues Gln-113 and Cys-151. The 186-residue stretch at 236–421 (FGSERMMWFS…VSVNIPYSRK (186 aa)) folds into the FAD-binding PCMH-type domain. Residues 264 to 271 (VIMGNTSV), Ala-345, Ser-354, His-358, Asp-367, and Leu-411 contribute to the FAD site. Mo-molybdopterin is bound by residues 806-807 (AF) and Met-1047. Ser-1068 is subject to Phosphoserine. Mo-molybdopterin is bound by residues 1088-1091 (GSVV), Gln-1203, and Leu-1268. Catalysis depends on Glu-1270, which acts as the Proton acceptor; for azaheterocycle hydroxylase activity.

The protein belongs to the xanthine dehydrogenase family. As to quaternary structure, homodimer. Requires [2Fe-2S] cluster as cofactor. FAD serves as cofactor. The cofactor is Mo-molybdopterin. As to expression, detected at high levels in liver, also detected in lung, kidney, lacrimal gland and olfactory mucosa.

It localises to the cytoplasm. The catalysed reaction is an aldehyde + O2 + H2O = a carboxylate + H2O2 + H(+). The enzyme catalyses retinal + O2 + H2O = retinoate + H2O2 + H(+). Its function is as follows. Oxidase with broad substrate specificity, oxidizing aromatic azaheterocycles, such as N1-methylnicotinamide, N-methylphthalazinium and phthalazine, as well as aldehydes, such as benzaldehyde, retinal, pyridoxal, and vanillin. Plays a key role in the metabolism of xenobiotics and drugs containing aromatic azaheterocyclic substituents. Participates in the bioactivation of prodrugs such as famciclovir, catalyzing the oxidation step from 6-deoxypenciclovir to penciclovir, which is a potent antiviral agent. Is probably involved in the regulation of reactive oxygen species homeostasis. May be a prominent source of superoxide generation via the one-electron reduction of molecular oxygen. May also catalyze nitric oxide (NO) production via the reduction of nitrite to NO with NADH or aldehyde as electron donor. May play a role in adipogenesis. The polypeptide is Aldehyde oxidase 1 (AOX1) (Macaca fascicularis (Crab-eating macaque)).